The sequence spans 88 residues: Large ribosomal subunit protein bL27 (88 aa).

A disordered region spans residues 1–21 (MAHKKGASSSRNGRDSAAQRL).

Belongs to the bacterial ribosomal protein bL27 family.

In Mycobacterium avium (strain 104), this protein is Large ribosomal subunit protein bL27.